The chain runs to 404 residues: Pectate lyase E (404 aa).

Residues 1–41 (MNNSRMSSVSTQKTTGRSALGTKSALAAIIATTMMVSVASA) form the signal peptide. Residues aspartate 182 and aspartate 225 each contribute to the Ca(2+) site. Residue arginine 278 is part of the active site.

It belongs to the polysaccharide lyase 1 family. PLBC subfamily. It depends on Ca(2+) as a cofactor.

The protein localises to the secreted. The enzyme catalyses Eliminative cleavage of (1-&gt;4)-alpha-D-galacturonan to give oligosaccharides with 4-deoxy-alpha-D-galact-4-enuronosyl groups at their non-reducing ends.. It functions in the pathway glycan metabolism; pectin degradation; 2-dehydro-3-deoxy-D-gluconate from pectin: step 2/5. In terms of biological role, involved in maceration and soft-rotting of plant tissue. Pectate lyases have been implicated as pathogenicity factors which induce maceration or rotting of plant tissue. PelE is sufficient to induce these effects under laboratory conditions. This Dickeya dadantii (strain 3937) (Erwinia chrysanthemi (strain 3937)) protein is Pectate lyase E (pelE).